The sequence spans 316 residues: MVNERKIRLLGPNEIRQLAEELDLNPTKKLGQNFVHDPNTVRKIVKAADVTADDNVVEIGPGLGSLTLALLEAGASVTAVEIDPRLAAKLPATLEEQGAAEADVAVILKDAMEVAVQDFADAGRPLPTALVANLPYNVSVPVLLHMLEEFPSIDRVLVMVQLEVADRLAAAPGSKIYGVPSVKAGFYGSVARAATIGKNVFWPAPKIDSGLVRIDRYAEGAEPWAGGQSGAEQFDADQGIEQLDAQKLRREVFDLADAAFLQRRKTLRAALSGHFGSGQAAEEALRSAGIDPTLRGEKLSTEQFVQLAATSLRSVR.

Positions 33, 35, 60, 81, 110, and 133 each coordinate S-adenosyl-L-methionine.

Belongs to the class I-like SAM-binding methyltransferase superfamily. rRNA adenine N(6)-methyltransferase family. RsmA subfamily.

It localises to the cytoplasm. The catalysed reaction is adenosine(1518)/adenosine(1519) in 16S rRNA + 4 S-adenosyl-L-methionine = N(6)-dimethyladenosine(1518)/N(6)-dimethyladenosine(1519) in 16S rRNA + 4 S-adenosyl-L-homocysteine + 4 H(+). Specifically dimethylates two adjacent adenosines (A1518 and A1519) in the loop of a conserved hairpin near the 3'-end of 16S rRNA in the 30S particle. May play a critical role in biogenesis of 30S subunits. The protein is Ribosomal RNA small subunit methyltransferase A of Corynebacterium jeikeium (strain K411).